Here is a 555-residue protein sequence, read N- to C-terminus: Transcriptional adapter 2b (555 aa).

A ZZ-type zinc finger spans residues 8 to 63 (FTKYNCTNCQDDIQGIRVHCAECENFDLCLQCFAAGAEIGAHQNNHSYQFMDTGTS). Zn(2+) is bound by residues cysteine 13, cysteine 16, cysteine 27, cysteine 30, cysteine 36, cysteine 39, histidine 49, and histidine 53. The 53-residue stretch at 69–121 (RGKGAWTAREEIRLLDAIEQYGFGNWEDISKHIETKSAEDAKEEYVNKFVNGT) folds into the SANT domain. A disordered region spans residues 318 to 372 (THRSTGPYGHGKTDHTHTSNGSHRPPSSSLHSPQPNLRKVEMSSGGEASSNSIAP). Positions 339 to 352 (SHRPPSSSLHSPQP) are enriched in low complexity. The span at 363–372 (GEASSNSIAP) shows a compositional bias: polar residues.

Component of histone acetyltransferase complexes containing Gcn5 and Ada3. As to quaternary structure, can heterooligomerize with Isoform A. Component of the Spt-Ada-Gcn5 acetyltransferase (SAGA) complex consisting of Ada1, Ada2b (Isoform B), Ada3, wda, Saf6, Spt3, Spt7, Spt20, Taf9, Taf10b, Taf12, Nipped-A/Tra1, Sf3b3, Sf3b5, not/nonstop, Sgf11, Sgf29, e(y)2, Atxn7 and Gcn5. Taf5 and Taf10, which has partially redundant properties with Taf10b, may also be part of this complex. Interacts (via C-terminus) with Spt3 and Taf12; the interactions are direct. Interacts with Ada3; the interaction is probably direct. May also interact directly with Spt7 and Gcn5. Interacts with p53. In terms of assembly, can heterooligomerize with Isoform B. Component of the Chiffon histone acetyltransferase (CHAT) complex consisting of Ada3, Sgf29, Gcn5, chif/chiffon and Ada2b (Isoform A). Interacts (via N-terminus) with Gcn5 and Ada3; the interaction is direct. Can interact directly with Spt7 in vitro but in vivo this interaction is not stable probably due to the absence of other SAGA components. Interacts with p53. As to expression, expressed in nurse cells of stage 10 egg chambers and transcripts are dumped into the oocyte when nurse cells degenerate at late oogenesis.

It is found in the nucleus. In terms of biological role, component of several Gcn5-containing histone acetyltransferase complexes that regulate nucleosome organization; involved in acetylation of histone H3, particularly on Lys-10 (H3K9ac) and Lys-15 (H3K14ac). Regulates the transcription of a subset of genes during development; affects recruitment of RNA polymerase II. May be involved in the function of some acidic activation domains, which activate transcription at distant sites. Involved in the p53-dependent apoptosis pathway response to DNA damage by genotoxic agents. Its function is as follows. Component of the SAGA histone acetyltransferase complex, which predominantly acetylates histone H3. Component of the CHAT histone acetyltransferase complex, which predominantly acetylates histone H3. The sequence is that of Transcriptional adapter 2b from Drosophila melanogaster (Fruit fly).